Consider the following 197-residue polypeptide: Nucleoside triphosphate pyrophosphatase (197 aa).

The active-site Proton acceptor is the Asp72.

The protein belongs to the Maf family. A divalent metal cation is required as a cofactor.

It is found in the cytoplasm. It catalyses the reaction a ribonucleoside 5'-triphosphate + H2O = a ribonucleoside 5'-phosphate + diphosphate + H(+). The catalysed reaction is a 2'-deoxyribonucleoside 5'-triphosphate + H2O = a 2'-deoxyribonucleoside 5'-phosphate + diphosphate + H(+). In terms of biological role, nucleoside triphosphate pyrophosphatase. May have a dual role in cell division arrest and in preventing the incorporation of modified nucleotides into cellular nucleic acids. The protein is Nucleoside triphosphate pyrophosphatase of Corynebacterium glutamicum (strain ATCC 13032 / DSM 20300 / JCM 1318 / BCRC 11384 / CCUG 27702 / LMG 3730 / NBRC 12168 / NCIMB 10025 / NRRL B-2784 / 534).